A 169-amino-acid polypeptide reads, in one-letter code: S-ribosylhomocysteine lyase (169 aa).

Fe cation contacts are provided by H54, H58, and C128.

It belongs to the LuxS family. As to quaternary structure, homodimer. It depends on Fe cation as a cofactor.

The catalysed reaction is S-(5-deoxy-D-ribos-5-yl)-L-homocysteine = (S)-4,5-dihydroxypentane-2,3-dione + L-homocysteine. In terms of biological role, involved in the synthesis of autoinducer 2 (AI-2) which is secreted by bacteria and is used to communicate both the cell density and the metabolic potential of the environment. The regulation of gene expression in response to changes in cell density is called quorum sensing. Catalyzes the transformation of S-ribosylhomocysteine (RHC) to homocysteine (HC) and 4,5-dihydroxy-2,3-pentadione (DPD). The chain is S-ribosylhomocysteine lyase from Shewanella sp. (strain ANA-3).